We begin with the raw amino-acid sequence, 65 residues long: Putative antitoxin PF2058 (65 aa).

It belongs to the UPF0165 family.

In terms of biological role, possibly the antitoxin component of a type II toxin-antitoxin (TA) system. The protein is Putative antitoxin PF2058 of Pyrococcus furiosus (strain ATCC 43587 / DSM 3638 / JCM 8422 / Vc1).